The primary structure comprises 213 residues: Thiopurine S-methyltransferase (213 aa).

S-adenosyl-L-methionine contacts are provided by Trp10, Leu45, Glu66, and Arg121.

This sequence belongs to the class I-like SAM-binding methyltransferase superfamily. TPMT family.

It is found in the cytoplasm. The catalysed reaction is S-adenosyl-L-methionine + a thiopurine = S-adenosyl-L-homocysteine + a thiopurine S-methylether.. The polypeptide is Thiopurine S-methyltransferase (Aliivibrio fischeri (strain ATCC 700601 / ES114) (Vibrio fischeri)).